The sequence spans 277 residues: Urease accessory protein UreD (277 aa).

This sequence belongs to the UreD family. UreD, UreF and UreG form a complex that acts as a GTP-hydrolysis-dependent molecular chaperone, activating the urease apoprotein by helping to assemble the nickel containing metallocenter of UreC. The UreE protein probably delivers the nickel.

Its subcellular location is the cytoplasm. In terms of biological role, required for maturation of urease via the functional incorporation of the urease nickel metallocenter. This chain is Urease accessory protein UreD, found in Rhodopseudomonas palustris (strain BisB18).